The chain runs to 486 residues: Pup--protein ligase (486 aa).

Position 33 (Glu33) interacts with Mg(2+). Position 76 (Arg76) interacts with ATP. Tyr78 provides a ligand contact to Mg(2+). The active-site Proton acceptor is Asp80. Glu86 provides a ligand contact to Mg(2+). Residues Thr89 and Trp451 each contribute to the ATP site.

This sequence belongs to the Pup ligase/Pup deamidase family. Pup-conjugating enzyme subfamily.

The enzyme catalyses ATP + [prokaryotic ubiquitin-like protein]-L-glutamate + [protein]-L-lysine = ADP + phosphate + N(6)-([prokaryotic ubiquitin-like protein]-gamma-L-glutamyl)-[protein]-L-lysine.. The protein operates within protein degradation; proteasomal Pup-dependent pathway. It participates in protein modification; protein pupylation. Catalyzes the covalent attachment of the prokaryotic ubiquitin-like protein modifier Pup to the proteasomal substrate proteins, thereby targeting them for proteasomal degradation. This tagging system is termed pupylation. The ligation reaction involves the side-chain carboxylate of the C-terminal glutamate of Pup and the side-chain amino group of a substrate lysine. The polypeptide is Pup--protein ligase (Bifidobacterium longum (strain DJO10A)).